The following is an 87-amino-acid chain: Serine rich endogenous peptide 17 (87 aa).

The N-terminal stretch at 1 to 28 (MTGKAPFFVILIAALLLLSSFFFGEVKA) is a signal peptide. Residues 32 to 87 (KQPKHRKLGNREGDENRSNEIVVQMKARVKRSKSKRGPQKKEPYKKPPCSPPTHPA) form a disordered region. Positions 40–49 (GNREGDENRS) are enriched in basic and acidic residues. An SCOOP motif motif is present at residues 51 to 71 (EIVVQMKARVKRSKSKRGPQK). The span at 58-69 (ARVKRSKSKRGP) shows a compositional bias: basic residues. Residues 63 to 65 (SKS) carry the SxS motif essential for MIK2 binding motif. A compositionally biased stretch (pro residues) spans 77-87 (KPPCSPPTHPA).

It belongs to the serine rich endogenous peptide (SCOOP) phytocytokine family. As to quaternary structure, interacts with MIK2 (via extracellular leucine-rich repeat domain); this interaction triggers the formation of complex between MIK2 and the BAK1/SERK3 and SERK4 coreceptors, and subsequent BAK1 activation by phosphorylation.

The protein localises to the cell membrane. Its subcellular location is the secreted. The protein resides in the extracellular space. It is found in the apoplast. Brassicaceae-specific phytocytokine (plant endogenous peptide released into the apoplast) perceived by MIK2 in a BAK1/SERK3 and SERK4 coreceptors-dependent manner, that modulates various physiological and antimicrobial processes including growth prevention and reactive oxygen species (ROS) response regulation. In Arabidopsis thaliana (Mouse-ear cress), this protein is Serine rich endogenous peptide 17.